We begin with the raw amino-acid sequence, 467 residues long: ATP synthase subunit beta (467 aa).

G156–T163 provides a ligand contact to ATP.

The protein belongs to the ATPase alpha/beta chains family. F-type ATPases have 2 components, CF(1) - the catalytic core - and CF(0) - the membrane proton channel. CF(1) has five subunits: alpha(3), beta(3), gamma(1), delta(1), epsilon(1). CF(0) has three main subunits: a(1), b(2) and c(9-12). The alpha and beta chains form an alternating ring which encloses part of the gamma chain. CF(1) is attached to CF(0) by a central stalk formed by the gamma and epsilon chains, while a peripheral stalk is formed by the delta and b chains.

It localises to the cell membrane. The enzyme catalyses ATP + H2O + 4 H(+)(in) = ADP + phosphate + 5 H(+)(out). In terms of biological role, produces ATP from ADP in the presence of a proton gradient across the membrane. The catalytic sites are hosted primarily by the beta subunits. This is ATP synthase subunit beta from Cytobacillus firmus (Bacillus firmus).